Reading from the N-terminus, the 259-residue chain is tRNA pseudouridine synthase A (259 aa).

Asp50 functions as the Nucleophile in the catalytic mechanism. Tyr101 is a substrate binding site.

It belongs to the tRNA pseudouridine synthase TruA family.

The catalysed reaction is uridine(38/39/40) in tRNA = pseudouridine(38/39/40) in tRNA. Functionally, formation of pseudouridine at positions 38, 39 and 40 in the anticodon stem and loop of transfer RNAs. The sequence is that of tRNA pseudouridine synthase A from Methanocaldococcus jannaschii (strain ATCC 43067 / DSM 2661 / JAL-1 / JCM 10045 / NBRC 100440) (Methanococcus jannaschii).